The chain runs to 119 residues: uncharacterized protein (119 aa).

A disordered region spans residues 78–119 (SHRKSQQHQTQGNQVLRGTRKLESPTVGPRPGLRRQHTRNFL). Positions 84 to 93 (QHQTQGNQVL) are enriched in polar residues. Over residues 109–119 (GLRRQHTRNFL) the composition is skewed to basic residues.

This is an uncharacterized protein from Saccharomyces cerevisiae (strain ATCC 204508 / S288c) (Baker's yeast).